We begin with the raw amino-acid sequence, 196 residues long: ATP-dependent Clp protease proteolytic subunit (196 aa).

Ser101 (nucleophile) is an active-site residue. His126 is a catalytic residue.

This sequence belongs to the peptidase S14 family. Component of the chloroplastic Clp protease core complex.

The protein resides in the plastid. It localises to the chloroplast stroma. The catalysed reaction is Hydrolysis of proteins to small peptides in the presence of ATP and magnesium. alpha-casein is the usual test substrate. In the absence of ATP, only oligopeptides shorter than five residues are hydrolyzed (such as succinyl-Leu-Tyr-|-NHMec, and Leu-Tyr-Leu-|-Tyr-Trp, in which cleavage of the -Tyr-|-Leu- and -Tyr-|-Trp bonds also occurs).. Cleaves peptides in various proteins in a process that requires ATP hydrolysis. Has a chymotrypsin-like activity. Plays a major role in the degradation of misfolded proteins. The polypeptide is ATP-dependent Clp protease proteolytic subunit (Lotus japonicus (Lotus corniculatus var. japonicus)).